A 620-amino-acid polypeptide reads, in one-letter code: Glutathione-regulated potassium-efflux system protein KefC (620 aa).

At 1-3 (MDS) the chain is on the periplasmic side. The helical transmembrane segment at 4–24 (HTLVQALIYLGSAALIVPIAV) threads the bilayer. A topological domain (cytoplasmic) is located at residue arginine 25. Residues 26–46 (LGLGSVLGYLIAGCIIGPWGL) traverse the membrane as a helical segment. At 47 to 53 (RLVTDAE) the chain is on the periplasmic side. A helical membrane pass occupies residues 54 to 74 (SILHFAEIGVVLMLFIIGLEL). Residues 75 to 89 (DPQRLWKLRAAVFGG) are Cytoplasmic-facing. The helical transmembrane segment at 90–110 (GALQMVICGGLLGLFCMLLGL) threads the bilayer. Residues 111 to 113 (RWQ) are Periplasmic-facing. Residues 114 to 134 (VAELIGMTLALSSTAIAMQAM) form a helical membrane-spanning segment. Residues 135–148 (NERNLMVTQMGRSA) are Cytoplasmic-facing. Residues 149–169 (FAVLLFQDIAAIPLVAMIPLL) form a helical membrane-spanning segment. Topologically, residues 170-177 (AASSASTT) are periplasmic. The chain crosses the membrane as a helical span at residues 178 to 198 (MGAFALSALKVAGALVLVVLL). Topologically, residues 199–213 (GRYVTRPALRFVARS) are cytoplasmic. Residues 214–233 (GLREVFSAVALFLVFGFGLL) traverse the membrane as a helical segment. The Periplasmic segment spans residues 234 to 236 (LEE). Residues 237 to 254 (VGLSMAMGAFLAGVLLAS) form a helical membrane-spanning segment. Topologically, residues 255 to 269 (SEYRHALESDIEPFK) are cytoplasmic. The helical transmembrane segment at 270–290 (GLLLGLFFIGVGMSIDFGTLI) threads the bilayer. Residues 291-293 (ENP) are Periplasmic-facing. A helical membrane pass occupies residues 294 to 314 (LRIVILLLGFLIIKIAMLWLI). At 315-326 (ARPLQVPNKQRR) the chain is on the cytoplasmic side. Residues 327–347 (WFAVLLGQGSEFAFVVFGAAQ) traverse the membrane as a helical segment. Over 348–358 (MANVLEPEWAK) the chain is Periplasmic. A helical membrane pass occupies residues 359-379 (SLTLAVALSMAATPILLVILN). Residues 380-620 (RLEQSSTEEA…ADEPETKPSS (241 aa)) are Cytoplasmic-facing. The region spanning 399–518 (QPRVIIAGFG…AGVEKPERET (120 aa)) is the RCK N-terminal domain. Positions 597-620 (GWQGTEEGKHTGNMADEPETKPSS) are disordered.

Belongs to the monovalent cation:proton antiporter 2 (CPA2) transporter (TC 2.A.37) family. KefC subfamily. In terms of assembly, homodimer. Interacts with the regulatory subunit KefF.

It localises to the cell inner membrane. In terms of biological role, pore-forming subunit of a potassium efflux system that confers protection against electrophiles. Catalyzes K(+)/H(+) antiport. The polypeptide is Glutathione-regulated potassium-efflux system protein KefC (Escherichia coli O157:H7).